A 373-amino-acid chain; its full sequence is Exonuclease V (373 aa).

Cys92 serves as a coordination point for [4Fe-4S] cluster. Residues Asp182 and Glu196 each contribute to the Mg(2+) site. 3 residues coordinate [4Fe-4S] cluster: Cys343, Cys346, and Cys352.

This sequence belongs to the EXO5 family. Monomer; monomeric form has weak exonuclease activity. Homodimer; homodimeric form is unsure but has much higher exonuclease activity, suggesting that it could homodimerize upon DNA-binding. Interacts with the replication protein A (RPA) complex. [4Fe-4S] cluster serves as cofactor. Requires Mg(2+) as cofactor.

The protein localises to the nucleus. Its subcellular location is the cytoplasm. It localises to the cytosol. Its function is as follows. Single-stranded DNA (ssDNA) bidirectional exonuclease involved in DNA repair. Probably involved in DNA repair following ultraviolet (UV) irradiation and interstrand cross-links (ICLs) damage. Has both 5'-3' and 3'-5' exonuclease activities with a strong preference for 5'-ends. Acts as a sliding exonuclease that loads at ssDNA ends and then slides along the ssDNA prior to cutting; however the sliding and the 3'-5' exonuclease activities are abolished upon binding to the replication protein A (RPA) complex that enforces 5'-directionality activity. This Homo sapiens (Human) protein is Exonuclease V (EXO5).